The sequence spans 149 residues: GATA transcription factor 15 (149 aa).

Basic and acidic residues predominate over residues 1–10 (MLDPTEKVID). Disordered stretches follow at residues 1–41 (MLDP…NEKK) and 76–102 (RRTLISNRSEDKKKKSHNRNPKFGDSL). The segment at 37-91 (SNEKKSCAICGTSKTPLWRGGPAGPKSLCNACGIRNRKKRRTLISNRSEDKKKKS) adopts a GATA-type zinc-finger fold.

Belongs to the type IV zinc-finger family. Class B subfamily.

It localises to the nucleus. Its function is as follows. Transcriptional regulator that specifically binds 5'-GATA-3' or 5'-GAT-3' motifs within gene promoters. The chain is GATA transcription factor 15 (GATA15) from Arabidopsis thaliana (Mouse-ear cress).